The chain runs to 156 residues: Small ribosomal subunit protein uS7 (156 aa).

This sequence belongs to the universal ribosomal protein uS7 family. As to quaternary structure, part of the 30S ribosomal subunit. Contacts proteins S9 and S11.

Functionally, one of the primary rRNA binding proteins, it binds directly to 16S rRNA where it nucleates assembly of the head domain of the 30S subunit. Is located at the subunit interface close to the decoding center, probably blocks exit of the E-site tRNA. The protein is Small ribosomal subunit protein uS7 of Pelobacter propionicus (strain DSM 2379 / NBRC 103807 / OttBd1).